Here is a 497-residue protein sequence, read N- to C-terminus: Succinate-semialdehyde dehydrogenase [NADP(+)] (497 aa).

The Proton acceptor role is filled by Glu-264. Catalysis depends on Cys-298, which acts as the Nucleophile.

This sequence belongs to the aldehyde dehydrogenase family. Homotetramer.

The protein localises to the cytoplasm. The catalysed reaction is succinate semialdehyde + NAD(+) + H2O = succinate + NADH + 2 H(+). It carries out the reaction succinate semialdehyde + NADP(+) + H2O = succinate + NADPH + 2 H(+). It functions in the pathway amino-acid degradation; 4-aminobutanoate degradation. With respect to regulation, inhibited by AMP, ADP anf ATP. In terms of biological role, catalyzes the oxidation of succinate semialdehyde to succinate. Can utilize both NAD(+) or NADP(+) as a coenzyme, but has a 2.5-fold lower activity with NADP(+) than with NAD(+). Functions in a gamma-aminobutyrate (GABA) degradation pathway that allows growth utilizing GABA as a nitrogen source. Functions in the GABA shunt, which allows to bypass 2 reactions in the TCA cycle by removing alpha-ketoglutarate from the cycle and feeding succinate and NADH back into the cycle. The polypeptide is Succinate-semialdehyde dehydrogenase [NADP(+)] (Saccharomyces cerevisiae (strain ATCC 204508 / S288c) (Baker's yeast)).